The primary structure comprises 305 residues: GTP cyclohydrolase FolE2 (305 aa).

This sequence belongs to the GTP cyclohydrolase IV family.

The catalysed reaction is GTP + H2O = 7,8-dihydroneopterin 3'-triphosphate + formate + H(+). The protein operates within cofactor biosynthesis; 7,8-dihydroneopterin triphosphate biosynthesis; 7,8-dihydroneopterin triphosphate from GTP: step 1/1. In terms of biological role, converts GTP to 7,8-dihydroneopterin triphosphate. The protein is GTP cyclohydrolase FolE2 of Xanthomonas axonopodis pv. citri (strain 306).